A 325-amino-acid polypeptide reads, in one-letter code: MSYQQRANDSMNSAKQYSSSAGAVHNSDEPFSSSGAPQNRNFDTSYTSEIPSNSSRAANDMGTDIGSGDPYAGMTSDTKKGFNSVESRKKEQSDVRGGDTSYSRRHDDSSYSSNKYSTGGNDSYSSGGRNEDYSTSGGSYTTDPSRTDDTASYGQSQYNQSRKTTQGGDYGEDYSQSYPTDTYGSRQKATPSDTVGGGAYDYSSSGSHTHGGSHGTEHRGGSYGNDNTANKTRGAVSSAGYSGEGYGKGTYATDTTAEANRRAATGTRNARTTAQRNAQLAEDEHVSMGDKMKGNMEKMAGKLTRDPELVQKGEDLKTGHHSERY.

Composition is skewed to polar residues over residues 1–21 (MSYQ…SSSA) and 29–57 (EPFS…SSRA). Residues 1 to 325 (MSYQQRANDS…LKTGHHSERY (325 aa)) form a disordered region. A compositionally biased stretch (basic and acidic residues) spans 86–109 (ESRKKEQSDVRGGDTSYSRRHDDS). 2 stretches are compositionally biased toward polar residues: residues 114–167 (NKYS…TTQG) and 174–193 (YSQS…TPSD). Composition is skewed to low complexity over residues 200 to 210 (YDYSSSGSHTH) and 252 to 278 (ATDT…QRNA). Residues 282–325 (EDEHVSMGDKMKGNMEKMAGKLTRDPELVQKGEDLKTGHHSERY) show a composition bias toward basic and acidic residues.

This is an uncharacterized protein from Schizosaccharomyces pombe (strain 972 / ATCC 24843) (Fission yeast).